The chain runs to 172 residues: uncharacterized protein (172 aa).

An N-terminal signal peptide occupies residues 1-22 (MKLFQLLLLVLTISSFIISNNG). At 23-140 (LVESHQGRMH…FSYENSSNET (118 aa)) the chain is on the extracellular side. Positions 27–69 (HQGRMHRGSGERHHRAGGNQQQPQPPSEQQVESSYNSNDDGSS) are disordered. Residues 29–42 (GRMHRGSGERHHRA) show a composition bias toward basic residues. A compositionally biased stretch (low complexity) spans 53 to 69 (SEQQVESSYNSNDDGSS). N-linked (GlcNAc...) asparagine glycosylation is found at Asn135 and Asn138. A helical transmembrane segment spans residues 141 to 161 (IVIYINPVTLVFTLVLLLTFI). Residues 162-172 (VLTITQSLRKY) are Cytoplasmic-facing.

Its subcellular location is the membrane. This is an uncharacterized protein from Dictyostelium discoideum (Social amoeba).